Consider the following 139-residue polypeptide: Large ribosomal subunit protein uL16 (139 aa).

The protein belongs to the universal ribosomal protein uL16 family. As to quaternary structure, part of the 50S ribosomal subunit.

Its function is as follows. Binds 23S rRNA and is also seen to make contacts with the A and possibly P site tRNAs. The polypeptide is Large ribosomal subunit protein uL16 (Chlorobium phaeobacteroides (strain BS1)).